The sequence spans 183 residues: NEDD8-conjugating enzyme Ubc12 (183 aa).

Met-1 is modified (N-acetylmethionine). The tract at residues Met-1–Ala-29 is disordered. The interaction with UBA3 stretch occupies residues Met-1–Leu-57. The residue at position 3 (Lys-3) is an N6-acetyllysine. Positions Ala-29–Ile-173 constitute a UBC core domain. Ser-50 carries the post-translational modification Phosphoserine. Cys-111 acts as the Glycyl thioester intermediate in catalysis. Arg-169 carries the post-translational modification Asymmetric dimethylarginine; alternate. Arg-169 is modified (omega-N-methylarginine; alternate).

Belongs to the ubiquitin-conjugating enzyme family. UBC12 subfamily. Interacts with UBA3 and RBX1. Interacts (N-terminally acetylated form) with (via DCUN1 domain) DCUN1D1, DCUN1D2, DCUN1D3, DCUN1D4 and DCUN1D5. The acetylation of Met-1 increases affinity for DCUN1D1 by about 2 orders of magnitude and is crucial for NEDD8 transfer to cullins.

The catalysed reaction is [E1 NEDD8-activating enzyme]-S-[NEDD8 protein]-yl-L-cysteine + [E2 NEDD8-conjugating enzyme]-L-cysteine = [E1 NEDD8-activating enzyme]-L-cysteine + [E2 NEDD8-conjugating enzyme]-S-[NEDD8-protein]-yl-L-cysteine.. Its pathway is protein modification; protein neddylation. Functionally, accepts the ubiquitin-like protein NEDD8 from the UBA3-NAE1 E1 complex and catalyzes its covalent attachment to other proteins. The specific interaction with the E3 ubiquitin ligase RBX1, but not RBX2, suggests that the RBX1-UBE2M complex neddylates specific target proteins, such as CUL1, CUL2, CUL3 and CUL4. Involved in cell proliferation. This Mus musculus (Mouse) protein is NEDD8-conjugating enzyme Ubc12 (Ube2m).